A 208-amino-acid chain; its full sequence is Uracil phosphoribosyltransferase (208 aa).

5-phospho-alpha-D-ribose 1-diphosphate-binding positions include Arg-78, Arg-103, and 130-138 (DPMLATGGT). Uracil is bound by residues Ile-193 and 198–200 (GDA). Asp-199 contacts 5-phospho-alpha-D-ribose 1-diphosphate.

Belongs to the UPRTase family. Mg(2+) serves as cofactor.

It carries out the reaction UMP + diphosphate = 5-phospho-alpha-D-ribose 1-diphosphate + uracil. It participates in pyrimidine metabolism; UMP biosynthesis via salvage pathway; UMP from uracil: step 1/1. Its activity is regulated as follows. Allosterically activated by GTP. In terms of biological role, catalyzes the conversion of uracil and 5-phospho-alpha-D-ribose 1-diphosphate (PRPP) to UMP and diphosphate. The protein is Uracil phosphoribosyltransferase of Maridesulfovibrio salexigens (strain ATCC 14822 / DSM 2638 / NCIMB 8403 / VKM B-1763) (Desulfovibrio salexigens).